A 1340-amino-acid chain; its full sequence is MDFQNDFLTNPLRVTLYNPAENEYTKTFIFLGSVPANVLQACRKDLQRTPKDKEILQNFYGEDWEKKLSQYVVGGDGDDLDEFEKLFVEDSGEETNVMMPEIETMYSEYSIFPEDTFKDIREKIYVATGIPPYRQHIFFFQNNTLQVTYRLLLSGSGVALDIRDYKKEFQQVGGLNIDASMESQKDELYVEALDSFQLIKNIHHIFVADLNTLVAPMRRQISIAIEDNYQFDLLYYGLIMKYWPLLSPDAFKLLVQSPLQMEKQYPALSPSLTSLKKRLLLEQKLINFTYARAQQVIAKYEGNRLTRGTLAVTSAMIKISPLVNIQINVRNVFDLFPATPDIPQLVVFFYSKTGPTVVSKHHITSTEPEKFSNKTFRVPTIILIRFINKKAFILTIQNNGHYFIESNWSENERHDFNSVVSTLNNFINPIIHTINDMGPAAFPRGGSLPLPSNEDIQISISSMSVSTFWPYTLSSKGFTELKSRWREYEQAGIISVRGLQQTGVYNFLFKKGIYSYDPHEIERMIIISSGPGRKMDINVALLQNTYAYLFDTNVAARWETIYGGRNIRIYHRVTDIKIEMFNITQEEFNYLWVYLFVFLDNLITGPDKILVNKLSQLHDKQQGKGASQLRALQEQDPDLYDLRKYDTQATVYSVLCQHPRPPVIYSEAEVKSMPPAKRKELVKYWNFTEGVPAYYSCPHPDYPHLSLLEGRHPLNYCLPCCQKTKALLGTKRFYINNTCLTKHTFVEQDLEDLNTQTSRHTLSYGKKIPVNRIAFLPHQIADELFLNTIKEPDIFCIVGVEQTMLGISNAGLFYSLARILDLAPKALAIEIAKAANTPQYYILGNGAGNMFSSGAELASLILQTFVEQKNQLLQWDTTWQDIFLDLVAICYDLHCVFFKDKQGDFEFEVSPNTIQKILSPSKKIAIIFDTDEGIYPMAITQQKRFLKNSEAQYIFTEDDPVMEVIQSMSEFMCKDNWWDIHDVKNIPGYTVGKKLINRHNFCYALLIDSDTDRPIYFPIRLSSYIHDDIPIDFDLRPTQIASFKETWKFITLFNKQYKQYEIIPSAVLQNIKKEFVGFLSEGKTGLYFYYAPTQTLPAALEKLPIATLTIDPRDIDQAILYPLEEPYPQQNKANKAFYINHLYKFLLIEFFDVLYGLQSNTTRKHIENLFQKTDFQKITSVTEFYTKLSDFVDLNDIHTIKHILETTDAEHALKVLQKNIFNFDYTLLSPLQSYTYDELCQHLKKLLTPRIEFYEDIETIDRGLINIYTSCQYSTLNQPQCEKKRLRIPVNHFENYIHILAADILNPLKHSTLLLTGLGVIDDLQFILRPQEIISVKNKF.

The protein belongs to the asfivirus G1340L family.

The protein resides in the virion. Its function is as follows. Putative initation factor. In African swine fever virus (isolate Tick/South Africa/Pretoriuskop Pr4/1996) (ASFV), this protein is Early transcription factor large subunit homolog.